A 332-amino-acid polypeptide reads, in one-letter code: Ketol-acid reductoisomerase (NADP(+)) (332 aa).

Residues 1 to 182 (MAVIYYDKDC…GSNRAGVLET (182 aa)) form the KARI N-terminal Rossmann domain. NADP(+)-binding positions include 25-28 (YGAQ) and 83-86 (DTSQ). Residue H108 is part of the active site. NADP(+) is bound at residue G134. The 146-residue stretch at 183–328 (TFAEETETDL…AELRSMMSWL (146 aa)) folds into the KARI C-terminal knotted domain. Mg(2+) contacts are provided by D191, E195, E227, and E231. Residue S252 coordinates substrate.

The protein belongs to the ketol-acid reductoisomerase family. Mg(2+) is required as a cofactor.

It carries out the reaction (2R)-2,3-dihydroxy-3-methylbutanoate + NADP(+) = (2S)-2-acetolactate + NADPH + H(+). The catalysed reaction is (2R,3R)-2,3-dihydroxy-3-methylpentanoate + NADP(+) = (S)-2-ethyl-2-hydroxy-3-oxobutanoate + NADPH + H(+). It participates in amino-acid biosynthesis; L-isoleucine biosynthesis; L-isoleucine from 2-oxobutanoate: step 2/4. Its pathway is amino-acid biosynthesis; L-valine biosynthesis; L-valine from pyruvate: step 2/4. Functionally, involved in the biosynthesis of branched-chain amino acids (BCAA). Catalyzes an alkyl-migration followed by a ketol-acid reduction of (S)-2-acetolactate (S2AL) to yield (R)-2,3-dihydroxy-isovalerate. In the isomerase reaction, S2AL is rearranged via a Mg-dependent methyl migration to produce 3-hydroxy-3-methyl-2-ketobutyrate (HMKB). In the reductase reaction, this 2-ketoacid undergoes a metal-dependent reduction by NADPH to yield (R)-2,3-dihydroxy-isovalerate. In Dehalococcoides mccartyi (strain ATCC BAA-2266 / KCTC 15142 / 195) (Dehalococcoides ethenogenes (strain 195)), this protein is Ketol-acid reductoisomerase (NADP(+)).